A 262-amino-acid chain; its full sequence is Orotidine 5'-phosphate decarboxylase (262 aa).

Substrate contacts are provided by residues Asp-35, 57–59 (KTH), 89–98 (DRKFADIGNT), Tyr-215, and Arg-233. Lys-91 serves as the catalytic Proton donor.

Belongs to the OMP decarboxylase family.

It catalyses the reaction orotidine 5'-phosphate + H(+) = UMP + CO2. It participates in pyrimidine metabolism; UMP biosynthesis via de novo pathway; UMP from orotate: step 2/2. This is Orotidine 5'-phosphate decarboxylase (URA3) from Pichia kudriavzevii (Yeast).